We begin with the raw amino-acid sequence, 471 residues long: ATP synthase subunit beta (471 aa).

153–160 provides a ligand contact to ATP; the sequence is GGAGVGKT.

This sequence belongs to the ATPase alpha/beta chains family. F-type ATPases have 2 components, CF(1) - the catalytic core - and CF(0) - the membrane proton channel. CF(1) has five subunits: alpha(3), beta(3), gamma(1), delta(1), epsilon(1). CF(0) has four main subunits: a(1), b(1), b'(1) and c(9-12).

The protein resides in the cell inner membrane. The catalysed reaction is ATP + H2O + 4 H(+)(in) = ADP + phosphate + 5 H(+)(out). Its function is as follows. Produces ATP from ADP in the presence of a proton gradient across the membrane. The catalytic sites are hosted primarily by the beta subunits. This Methylibium petroleiphilum (strain ATCC BAA-1232 / LMG 22953 / PM1) protein is ATP synthase subunit beta.